Consider the following 1802-residue polypeptide: Protein TIC 214 (1802 aa).

A run of 6 helical transmembrane segments spans residues 19-39 (IINS…FSIG), 68-88 (FIAG…HLAL), 91-111 (PHTI…WNNH), 133-153 (VFLN…SSML), 176-196 (VGWL…LVWI), and 227-247 (IFSI…PSPI).

It belongs to the TIC214 family. As to quaternary structure, part of the Tic complex.

The protein resides in the plastid. The protein localises to the chloroplast inner membrane. Its function is as follows. Involved in protein precursor import into chloroplasts. May be part of an intermediate translocation complex acting as a protein-conducting channel at the inner envelope. In Nasturtium officinale (Watercress), this protein is Protein TIC 214.